We begin with the raw amino-acid sequence, 248 residues long: Triosephosphate isomerase (248 aa).

9–11 contacts substrate; the sequence is NWK. The Electrophile role is filled by H94. The Proton acceptor role is filled by E166. Substrate is bound by residues G172, S212, and 233–234; that span reads GG.

Belongs to the triosephosphate isomerase family. Homodimer.

The protein localises to the cytoplasm. It catalyses the reaction D-glyceraldehyde 3-phosphate = dihydroxyacetone phosphate. It functions in the pathway carbohydrate biosynthesis; gluconeogenesis. The protein operates within carbohydrate degradation; glycolysis; D-glyceraldehyde 3-phosphate from glycerone phosphate: step 1/1. In terms of biological role, involved in the gluconeogenesis. Catalyzes stereospecifically the conversion of dihydroxyacetone phosphate (DHAP) to D-glyceraldehyde-3-phosphate (G3P). The polypeptide is Triosephosphate isomerase (Thermoanaerobacter sp. (strain X514)).